A 215-amino-acid polypeptide reads, in one-letter code: Ran-specific GTPase-activating protein 1 (215 aa).

2 stretches are compositionally biased toward basic and acidic residues: residues 1–18 (MSAEQEKKTQGTTKEEQK) and 26–35 (VASKQTEEAK). A disordered region spans residues 1–78 (MSAEQEKKTQ…ASPEVHFEPI (78 aa)). S70 is modified (phosphoserine). The RanBD1 domain maps to 74-210 (HFEPIVKLSA…FEKYQEENAK (137 aa)).

It belongs to the RANBP1 family.

The protein resides in the cytoplasm. Functionally, stimulates the GTPase activity in the presence of RNA1. May potentiate the action of RanGAP1 (RNA1), thus playing the role of a negative regulator. The protein is Ran-specific GTPase-activating protein 1 (sbp1) of Schizosaccharomyces pombe (strain 972 / ATCC 24843) (Fission yeast).